Consider the following 482-residue polypeptide: tRNA sulfurtransferase (482 aa).

Residues 61 to 165 (KETLEVLTQT…NDKLNQVIER (105 aa)) form the THUMP domain. Residues 183–184 (LI), K265, G287, and Q296 contribute to the ATP site. C344 and C456 form a disulfide bridge. Residues 404 to 482 (VAEHAVVLDI…GFHNVKVYRP (79 aa)) form the Rhodanese domain. Catalysis depends on C456, which acts as the Cysteine persulfide intermediate.

This sequence belongs to the ThiI family.

It localises to the cytoplasm. The enzyme catalyses [ThiI sulfur-carrier protein]-S-sulfanyl-L-cysteine + a uridine in tRNA + 2 reduced [2Fe-2S]-[ferredoxin] + ATP + H(+) = [ThiI sulfur-carrier protein]-L-cysteine + a 4-thiouridine in tRNA + 2 oxidized [2Fe-2S]-[ferredoxin] + AMP + diphosphate. It carries out the reaction [ThiS sulfur-carrier protein]-C-terminal Gly-Gly-AMP + S-sulfanyl-L-cysteinyl-[cysteine desulfurase] + AH2 = [ThiS sulfur-carrier protein]-C-terminal-Gly-aminoethanethioate + L-cysteinyl-[cysteine desulfurase] + A + AMP + 2 H(+). The protein operates within cofactor biosynthesis; thiamine diphosphate biosynthesis. Its function is as follows. Catalyzes the ATP-dependent transfer of a sulfur to tRNA to produce 4-thiouridine in position 8 of tRNAs, which functions as a near-UV photosensor. Also catalyzes the transfer of sulfur to the sulfur carrier protein ThiS, forming ThiS-thiocarboxylate. This is a step in the synthesis of thiazole, in the thiamine biosynthesis pathway. The sulfur is donated as persulfide by IscS. The polypeptide is tRNA sulfurtransferase (Vibrio atlanticus (strain LGP32) (Vibrio splendidus (strain Mel32))).